The chain runs to 613 residues: Chaperone protein DnaK (613 aa).

The tract at residues 578–613 (MYQSQATQGTSQNSSQNNNSQNNNGDTVDADFKESK) is disordered. The segment covering 580–602 (QSQATQGTSQNSSQNNNSQNNNG) has biased composition (low complexity).

This sequence belongs to the heat shock protein 70 family.

In terms of biological role, acts as a chaperone. This Picrophilus torridus (strain ATCC 700027 / DSM 9790 / JCM 10055 / NBRC 100828 / KAW 2/3) protein is Chaperone protein DnaK.